The following is a 382-amino-acid chain: 1-deoxy-D-xylulose 5-phosphate reductoisomerase (382 aa).

Threonine 10, glycine 11, serine 12, isoleucine 13, glycine 36, and asparagine 122 together coordinate NADPH. Lysine 123 contacts 1-deoxy-D-xylulose 5-phosphate. NADPH is bound at residue glutamate 124. Position 148 (aspartate 148) interacts with Mn(2+). Positions 149, 150, 174, and 197 each coordinate 1-deoxy-D-xylulose 5-phosphate. Glutamate 150 lines the Mn(2+) pocket. Position 203 (glycine 203) interacts with NADPH. The 1-deoxy-D-xylulose 5-phosphate site is built by serine 210, asparagine 215, lysine 216, and glutamate 219. Glutamate 219 serves as a coordination point for Mn(2+).

It belongs to the DXR family. Requires Mg(2+) as cofactor. It depends on Mn(2+) as a cofactor.

The catalysed reaction is 2-C-methyl-D-erythritol 4-phosphate + NADP(+) = 1-deoxy-D-xylulose 5-phosphate + NADPH + H(+). It functions in the pathway isoprenoid biosynthesis; isopentenyl diphosphate biosynthesis via DXP pathway; isopentenyl diphosphate from 1-deoxy-D-xylulose 5-phosphate: step 1/6. In terms of biological role, catalyzes the NADPH-dependent rearrangement and reduction of 1-deoxy-D-xylulose-5-phosphate (DXP) to 2-C-methyl-D-erythritol 4-phosphate (MEP). The protein is 1-deoxy-D-xylulose 5-phosphate reductoisomerase of Pelodictyon phaeoclathratiforme (strain DSM 5477 / BU-1).